The primary structure comprises 365 residues: MNLAAMDPKNYDAQLQQKRIKLEKAFADFNPPALEVFASEPMHYRMRAEFRMWHQGDDLYYYMFDKALNAKVRCDQYLPAGLIINQMMAALIAELTPNPALRYRLFQVDFLSTLSGEILVSLLYHRQLDEEWREQATQLKAKLSAQFNVNIIGRARKQKIDLDKDFVVETLTVNEQVLHYKQIENSFTQPNAKVSVKMLEWAIDATKDSQGDLLELYCGNGNFTIALARNFNRVLATELAKPSVDAAQYNIDINHVDNVQIIRMSAEDFSDAMAKKRQFRRLEGIDLDSYDCNTIFVDPPRAGIDPETLKLIQGYERILYISCNPETLNDNLLTLGQTHKITRFALFDQFPYTDHMESGVLLVRK.

Q189, Y217, N222, E238, and D298 together coordinate S-adenosyl-L-methionine. The active-site Nucleophile is C323. The Proton acceptor role is filled by E357.

It belongs to the class I-like SAM-binding methyltransferase superfamily. RNA M5U methyltransferase family. TrmA subfamily.

The catalysed reaction is uridine(54) in tRNA + S-adenosyl-L-methionine = 5-methyluridine(54) in tRNA + S-adenosyl-L-homocysteine + H(+). It carries out the reaction uridine(341) in tmRNA + S-adenosyl-L-methionine = 5-methyluridine(341) in tmRNA + S-adenosyl-L-homocysteine + H(+). Its function is as follows. Dual-specificity methyltransferase that catalyzes the formation of 5-methyluridine at position 54 (m5U54) in all tRNAs, and that of position 341 (m5U341) in tmRNA (transfer-mRNA). This is tRNA/tmRNA (uracil-C(5))-methyltransferase from Shewanella frigidimarina (strain NCIMB 400).